The chain runs to 406 residues: Purine nucleoside permease (406 aa).

The first 22 residues, 1–22 (MKLSTLFTLATTISTLTTFTIA), serve as a signal peptide directing secretion.

This sequence belongs to the NUP family. Predicted to be a substrate for cleavage by KEX2.

Mammalian nucleoside transport inhibitors dipyridamole and NBMPR inhibit adenosine transport by NUP. In terms of biological role, nucleoside permease that transports adenosine and guanosine. Does not show any transport activities towards cytidine, adenine, guanine, uridine, and uracil. This chain is Purine nucleoside permease, found in Candida albicans (strain SC5314 / ATCC MYA-2876) (Yeast).